We begin with the raw amino-acid sequence, 670 residues long: DNA-binding transcriptional activator HyfR (670 aa).

The GAF domain occupies 169 to 311 (DLDDLIADVA…HIADRIAIAV (143 aa)). The Cys-rich segment, might bind a metal cluster signature appears at 207 to 221 (CSDLSASHCACLPRC). A Sigma-54 factor interaction domain is found at 347-576 (IIYQSQAMED…LENVIERAVL (230 aa)). Residues 375 to 382 (GETGTGKE) and 438 to 447 (ADGGTLFLDE) contribute to the ATP site. The segment at residues 641 to 660 (PRGAATRLGMKRTTLLSRMQ) is a DNA-binding region (H-T-H motif).

Its function is as follows. A transcriptional activator of its own operon; when overexpressed operon expression is strongly enhanced by low pH (under pH 6.0), strongly inhibited by O(2) but only weakly stimulated by fumarate. Expression in situ is very weak. The chain is DNA-binding transcriptional activator HyfR from Escherichia coli (strain K12).